The following is a 244-amino-acid chain: uncharacterized protein (244 aa).

This is an uncharacterized protein from Ostreid herpesvirus 1 (isolate France) (OsHV-1).